The chain runs to 223 residues: Protein-L-isoaspartate O-methyltransferase (223 aa).

Ser70 is a catalytic residue.

This sequence belongs to the methyltransferase superfamily. L-isoaspartyl/D-aspartyl protein methyltransferase family.

It localises to the cytoplasm. The enzyme catalyses [protein]-L-isoaspartate + S-adenosyl-L-methionine = [protein]-L-isoaspartate alpha-methyl ester + S-adenosyl-L-homocysteine. Functionally, catalyzes the methyl esterification of L-isoaspartyl residues in peptides and proteins that result from spontaneous decomposition of normal L-aspartyl and L-asparaginyl residues. It plays a role in the repair and/or degradation of damaged proteins. This Saccharophagus degradans (strain 2-40 / ATCC 43961 / DSM 17024) protein is Protein-L-isoaspartate O-methyltransferase.